Reading from the N-terminus, the 533-residue chain is Glucose-6-phosphate isomerase (533 aa).

Glu-322 (proton donor) is an active-site residue. Catalysis depends on residues His-351 and Lys-455.

This sequence belongs to the GPI family.

It is found in the cytoplasm. The catalysed reaction is alpha-D-glucose 6-phosphate = beta-D-fructose 6-phosphate. The protein operates within carbohydrate biosynthesis; gluconeogenesis. Its pathway is carbohydrate degradation; glycolysis; D-glyceraldehyde 3-phosphate and glycerone phosphate from D-glucose: step 2/4. Its function is as follows. Catalyzes the reversible isomerization of glucose-6-phosphate to fructose-6-phosphate. This chain is Glucose-6-phosphate isomerase, found in Desulfitobacterium hafniense (strain Y51).